We begin with the raw amino-acid sequence, 545 residues long: Chaperonin GroEL (545 aa).

ATP-binding positions include 29–32, Lys-50, 86–90, Gly-415, and Asp-495; these read TLGP and DGTTT.

This sequence belongs to the chaperonin (HSP60) family. Forms a cylinder of 14 subunits composed of two heptameric rings stacked back-to-back. Interacts with the co-chaperonin GroES.

Its subcellular location is the cytoplasm. It catalyses the reaction ATP + H2O + a folded polypeptide = ADP + phosphate + an unfolded polypeptide.. Its function is as follows. Together with its co-chaperonin GroES, plays an essential role in assisting protein folding. The GroEL-GroES system forms a nano-cage that allows encapsulation of the non-native substrate proteins and provides a physical environment optimized to promote and accelerate protein folding. This Bacteroides thetaiotaomicron (strain ATCC 29148 / DSM 2079 / JCM 5827 / CCUG 10774 / NCTC 10582 / VPI-5482 / E50) protein is Chaperonin GroEL.